A 134-amino-acid chain; its full sequence is Phosphomevalonate dehydratase small subunit (134 aa).

The active-site Proton acceptor is Ser-62.

Belongs to the AcnX type II small subunit family. As to quaternary structure, heterodimer composed of a large subunit (PMDh-L) and a small subunit (PMDh-S).

It carries out the reaction (R)-5-phosphomevalonate = (2E)-3-methyl-5-phosphooxypent-2-enoate + H2O. The protein operates within isoprenoid biosynthesis; isopentenyl diphosphate biosynthesis via mevalonate pathway. Its function is as follows. Component of a hydro-lyase that catalyzes the dehydration of mevalonate 5-phosphate (MVA5P) to form trans-anhydromevalonate 5-phosphate (tAHMP). Involved in the archaeal mevalonate (MVA) pathway, which provides fundamental precursors for isoprenoid biosynthesis, such as isopentenyl diphosphate (IPP) and dimethylallyl diphosphate (DMAPP). This Pyrococcus furiosus (strain ATCC 43587 / DSM 3638 / JCM 8422 / Vc1) protein is Phosphomevalonate dehydratase small subunit.